Consider the following 431-residue polypeptide: Serine--tRNA ligase (431 aa).

238-240 lines the L-serine pocket; the sequence is TSE. 269–271 contributes to the ATP binding site; it reads RSE. Residue Glu292 coordinates L-serine. 356-359 is a binding site for ATP; it reads EISS. Ser391 provides a ligand contact to L-serine.

This sequence belongs to the class-II aminoacyl-tRNA synthetase family. Type-1 seryl-tRNA synthetase subfamily. As to quaternary structure, homodimer. The tRNA molecule binds across the dimer.

The protein localises to the cytoplasm. It carries out the reaction tRNA(Ser) + L-serine + ATP = L-seryl-tRNA(Ser) + AMP + diphosphate + H(+). It catalyses the reaction tRNA(Sec) + L-serine + ATP = L-seryl-tRNA(Sec) + AMP + diphosphate + H(+). It participates in aminoacyl-tRNA biosynthesis; selenocysteinyl-tRNA(Sec) biosynthesis; L-seryl-tRNA(Sec) from L-serine and tRNA(Sec): step 1/1. Catalyzes the attachment of serine to tRNA(Ser). Is also able to aminoacylate tRNA(Sec) with serine, to form the misacylated tRNA L-seryl-tRNA(Sec), which will be further converted into selenocysteinyl-tRNA(Sec). The protein is Serine--tRNA ligase of Leptothrix cholodnii (strain ATCC 51168 / LMG 8142 / SP-6) (Leptothrix discophora (strain SP-6)).